Consider the following 144-residue polypeptide: Cytochrome c-type biogenesis protein CcmE (144 aa).

Residues 1–7 are Cytoplasmic-facing; it reads MTRKQKR. Residues 8–28 form a helical; Signal-anchor for type II membrane protein membrane-spanning segment; sequence LAVIGSGMGFLALAAALTFYA. Residues 29 to 144 lie on the Periplasmic side of the membrane; sequence LGQQTSYFYM…LKKDGLWQEQ (116 aa). Heme is bound by residues histidine 122 and tyrosine 126.

This sequence belongs to the CcmE/CycJ family.

It is found in the cell inner membrane. Functionally, heme chaperone required for the biogenesis of c-type cytochromes. Transiently binds heme delivered by CcmC and transfers the heme to apo-cytochromes in a process facilitated by CcmF and CcmH. This chain is Cytochrome c-type biogenesis protein CcmE, found in Chelativorans sp. (strain BNC1).